The chain runs to 108 residues: ATP-dependent Clp protease adapter protein ClpS (108 aa).

Residues 1–15 (MPRESSPDSHHEHGV) are compositionally biased toward basic and acidic residues. The tract at residues 1–24 (MPRESSPDSHHEHGVAVEPARPEV) is disordered.

Belongs to the ClpS family. Binds to the N-terminal domain of the chaperone ClpA.

Functionally, involved in the modulation of the specificity of the ClpAP-mediated ATP-dependent protein degradation. This Stenotrophomonas maltophilia (strain R551-3) protein is ATP-dependent Clp protease adapter protein ClpS.